We begin with the raw amino-acid sequence, 373 residues long: Flagellar P-ring protein (373 aa).

The first 30 residues, 1–30, serve as a signal peptide directing secretion; it reads MTNRWSFDVKKNLVTLILTWLCLSISTAQA.

It belongs to the FlgI family. In terms of assembly, the basal body constitutes a major portion of the flagellar organelle and consists of four rings (L,P,S, and M) mounted on a central rod.

Its subcellular location is the periplasm. It localises to the bacterial flagellum basal body. Assembles around the rod to form the L-ring and probably protects the motor/basal body from shearing forces during rotation. This Aliivibrio salmonicida (strain LFI1238) (Vibrio salmonicida (strain LFI1238)) protein is Flagellar P-ring protein.